The chain runs to 1857 residues: Chitin synthase Y (1857 aa).

The segment at Met-1 to Pro-22 is disordered. Residues Met-1–Glu-788 form the Myosin motor domain. Gly-102–Thr-109 contributes to the ATP binding site. Residues Ser-601–Ser-653 are disordered. An N-linked (GlcNAc...) asparagine glycan is attached at Asn-634. An actin-binding region spans residues Leu-668–Asp-692. 2 helical membrane passes run Trp-898 to Gly-918 and Leu-937 to Val-957. The 60-residue stretch at Gln-961–Phe-1020 folds into the Cytochrome b5 heme-binding domain. N-linked (GlcNAc...) asparagine glycosylation is found at Asn-1047 and Asn-1072. A helical transmembrane segment spans residues Phe-1209 to Leu-1229. The N-linked (GlcNAc...) asparagine glycan is linked to Asn-1572. Helical transmembrane passes span Leu-1603–Leu-1623, Ile-1630–Ile-1650, and Met-1657–Phe-1677. Residues Leu-1799–Ser-1854 enclose the DEK-C domain.

In the N-terminal section; belongs to the TRAFAC class myosin-kinesin ATPase superfamily. Myosin family. It in the C-terminal section; belongs to the chitin synthase family. Class V subfamily.

It is found in the cell membrane. The protein resides in the cell septum. It localises to the cell tip. It carries out the reaction [(1-&gt;4)-N-acetyl-beta-D-glucosaminyl](n) + UDP-N-acetyl-alpha-D-glucosamine = [(1-&gt;4)-N-acetyl-beta-D-glucosaminyl](n+1) + UDP + H(+). In terms of biological role, polymerizes chitin, a structural polymer of the cell wall and septum, by transferring the sugar moiety of UDP-GlcNAc to the non-reducing end of the growing chitin polymer. Specifically involved in hyphal elongation and new cell wall formation. This chain is Chitin synthase Y, found in Aspergillus oryzae (strain ATCC 42149 / RIB 40) (Yellow koji mold).